We begin with the raw amino-acid sequence, 153 residues long: MTDKKRRQRGSRTHGGGTHKNRRGAGNRGGRGRAGRKKHEQHNYEDVGKSGFKRPEKTDRDVAVLSVQELDEDIPVLSESGVAEETEFGYRVDARDVVDDGWDADVVKVLGGGQLYEQLEVTADAFSDAAVELIEGEGGDAVVSERASEDDEE.

Basic residues predominate over residues 1-40; that stretch reads MTDKKRRQRGSRTHGGGTHKNRRGAGNRGGRGRAGRKKHE. Residues 1–60 are disordered; it reads MTDKKRRQRGSRTHGGGTHKNRRGAGNRGGRGRAGRKKHEQHNYEDVGKSGFKRPEKTDR. The span at 41–60 shows a compositional bias: basic and acidic residues; sequence QHNYEDVGKSGFKRPEKTDR.

The protein belongs to the universal ribosomal protein uL15 family. As to quaternary structure, part of the 50S ribosomal subunit.

In terms of biological role, binds to the 23S rRNA. The protein is Large ribosomal subunit protein uL15 of Halobacterium salinarum (strain ATCC 29341 / DSM 671 / R1).